A 356-amino-acid chain; its full sequence is MDANVLIMAGGTGGHVFPALACAREFQARGYKVHWLGTPRGIENELVPQAGLTLHLINVTGLRGKGRLSLLKAPFMLLKALMQARKVVRQVKPVCVVGFGGYVTGPGGLAAKLAGVPLIIHEQNAVAGTANRSLASFASRVCEAFPNTFAASSKRRTTGNPVRVELFLETPRQALTGRKARLLVLGGSLGAEPLNKLLPEALARLPQDIQPEVFHQSGKNHDAVTAERYRNVGVEAQVAPFIQNMAQAYSWADLVVCRAGALTISELAAAGLPSLLIPLPHAIDDHQSRNADYLAREGAAFVMPQATTGAAEMAARLKEVLMQPEQLNSMARTARSLAKPDATNTVVNVCVEVAHG.

Residues 12 to 14 (TGG), Asn124, Arg163, Ser188, Ile242, and Gln287 each bind UDP-N-acetyl-alpha-D-glucosamine.

Belongs to the glycosyltransferase 28 family. MurG subfamily.

Its subcellular location is the cell inner membrane. It carries out the reaction di-trans,octa-cis-undecaprenyl diphospho-N-acetyl-alpha-D-muramoyl-L-alanyl-D-glutamyl-meso-2,6-diaminopimeloyl-D-alanyl-D-alanine + UDP-N-acetyl-alpha-D-glucosamine = di-trans,octa-cis-undecaprenyl diphospho-[N-acetyl-alpha-D-glucosaminyl-(1-&gt;4)]-N-acetyl-alpha-D-muramoyl-L-alanyl-D-glutamyl-meso-2,6-diaminopimeloyl-D-alanyl-D-alanine + UDP + H(+). It participates in cell wall biogenesis; peptidoglycan biosynthesis. In terms of biological role, cell wall formation. Catalyzes the transfer of a GlcNAc subunit on undecaprenyl-pyrophosphoryl-MurNAc-pentapeptide (lipid intermediate I) to form undecaprenyl-pyrophosphoryl-MurNAc-(pentapeptide)GlcNAc (lipid intermediate II). The sequence is that of UDP-N-acetylglucosamine--N-acetylmuramyl-(pentapeptide) pyrophosphoryl-undecaprenol N-acetylglucosamine transferase from Pseudomonas savastanoi pv. phaseolicola (strain 1448A / Race 6) (Pseudomonas syringae pv. phaseolicola (strain 1448A / Race 6)).